Consider the following 367-residue polypeptide: MNSSPAGTPSPQPSRANGNINLGPSANPNAQPTDFDFLKVIGKGNYGKVLLAKRKSDGAFYAVKVLQKKSILKKKEQSHIMAERSVLLKNVRHPFLVGLRYSFQTPEKLYFVLDYVNGGELFFHLQRERRFLEPRARFYAAEVASAIGYLHSLNIIYRDLKPENILLDCQGHVVLTDFGLCKEGVEPEDTTSTFCGTPEYLAPEVLRKEPYDRAVDWWCLGAVLYEMLHGLPPFYSQDVSQMYENILHQPLQIPGGRTVAACDLLQSLLHKDQRQRLGSKADFLEIKNHVFFSPINWDDLYHKRLTPPFNPNVTGPADLKHFDPEFTQEAVSKSIGCTPDTVASSSGASSAFLGFSYAPEDDDILDC.

Residues 1–26 (MNSSPAGTPSPQPSRANGNINLGPSA) form a disordered region. Ser-10 carries the post-translational modification Phosphoserine. The Protein kinase domain occupies 35-292 (FDFLKVIGKG…FLEIKNHVFF (258 aa)). ATP-binding positions include 41–49 (IGKGNYGKV) and Lys-64. The short motif at 68 to 78 (KKSILKKKEQS) is the Nuclear localization signal element. Catalysis depends on Asp-159, which acts as the Proton acceptor. Thr-193 carries the post-translational modification Phosphothreonine; by PDPK1. Positions 293 to 367 (SPINWDDLYH…APEDDDILDC (75 aa)) constitute an AGC-kinase C-terminal domain. Phosphoserine is present on residues Ser-334 and Ser-356. At Tyr-357 the chain carries Phosphotyrosine.

This sequence belongs to the protein kinase superfamily. AGC Ser/Thr protein kinase family. In terms of processing, activated by phosphorylation on Ser-356 by an unknown kinase (may be mTORC2 but not confirmed), transforming it into a substrate for PDPK1 which then phosphorylates it on Thr-193. In terms of tissue distribution, highly expressed in liver, kidney and pancreas, and at lower levels in brain.

It is found in the cytoplasm. The protein localises to the nucleus. The catalysed reaction is L-seryl-[protein] + ATP = O-phospho-L-seryl-[protein] + ADP + H(+). It carries out the reaction L-threonyl-[protein] + ATP = O-phospho-L-threonyl-[protein] + ADP + H(+). With respect to regulation, two specific sites, one in the kinase domain (Thr-193) and the other in the C-terminal regulatory region (Ser-356), need to be phosphorylated for its full activation. Functionally, serine/threonine-protein kinase which is involved in the regulation of a wide variety of ion channels, membrane transporters, cell growth, survival and proliferation. Up-regulates Na(+) channels: SCNN1A/ENAC, K(+) channels: KCNA3/Kv1.3, KCNE1 and KCNQ1, amino acid transporter: SLC6A19, glutamate transporter: SLC1A6/EAAT4, glutamate receptors: GRIA1/GLUR1 and GRIK2/GLUR6, Na(+)/H(+) exchanger: SLC9A3/NHE3, and the Na(+)/K(+) ATPase. This Homo sapiens (Human) protein is Serine/threonine-protein kinase Sgk2 (SGK2).